A 223-amino-acid chain; its full sequence is Prolactin-3D4 (223 aa).

The N-terminal stretch at 1–28 is a signal peptide; that stretch reads MQLTLTLSGSSMQLLLLVSNLLLWENMA. 2 disulfide bridges follow: cysteine 80–cysteine 198 and cysteine 215–cysteine 223. Residues asparagine 108 and asparagine 157 are each glycosylated (N-linked (GlcNAc...) asparagine).

Belongs to the somatotropin/prolactin family. Post-translationally, N-glycosylated.

Its subcellular location is the secreted. This Rattus norvegicus (Rat) protein is Prolactin-3D4 (Prl3d4).